The chain runs to 489 residues: MTFRNCVAVDLGASSGRVMLARYERECRSLTLREIHRFNNGLHSQNGYVTWDVDSLESAIRLGLNKVCEEGIRIDSIGIDTWGVDFVLLDQQGQRVGLPVAYRDSRTNGLMAQAQQQLGKRDIYQRSGIQFLPFNTLYQLRALTEQQPELIPHIAHALLMPDYFSYRLTGKMNWEYTNATTTQLVNINSDDWDESLLAWSGANKAWFGRPTHPGNVIGHWICPQGNEIPVVAVASHDTASAVIASPLNGSRAAYLSSGTWSLMGFESQTPFTNDTALAANITNEGGAEGRYRVLKNIMGLWLLQRVLQEQQINDLPALISATQALPACRFIINPNDDRFINPETMCSEIQAACRETAQPIPESDAELARCIFDSLALLYADVLHELAQLRGEDFSQLHIVGGGCQNTLLNQLCADACGIRVIAGPVEASTLGNIGIQLMTLDELNNVDDFRQVVSTTANLTTFTPNPDSEIAHYVAQIHSTRQTKELCA.

Residue 13–17 (ASSGR) participates in ATP binding. Residues Cys-68 and Cys-222 are joined by a disulfide bond. Substrate-binding positions include Gly-83 and 236–238 (HDT). Asp-237 acts as the Proton acceptor in catalysis. Position 259 (Thr-259) interacts with ATP. A substrate-binding site is contributed by Asn-296. Residue Gln-304 participates in ATP binding. An intrachain disulfide couples Cys-353 to Cys-370. Position 402 (Gly-402) interacts with ATP. Cys-413 and Cys-417 are disulfide-bonded.

It belongs to the rhamnulokinase family. As to quaternary structure, monomer. Requires Mg(2+) as cofactor.

The catalysed reaction is L-rhamnulose + ATP = L-rhamnulose 1-phosphate + ADP + H(+). Its pathway is carbohydrate degradation; L-rhamnose degradation; glycerone phosphate from L-rhamnose: step 2/3. Functionally, involved in the catabolism of L-rhamnose (6-deoxy-L-mannose). Catalyzes the transfer of the gamma-phosphate group from ATP to the 1-hydroxyl group of L-rhamnulose to yield L-rhamnulose 1-phosphate. This Escherichia coli (strain K12 / DH10B) protein is Rhamnulokinase.